The following is a 134-amino-acid chain: MGRDTIADIITSIRNADMDKKRVVRIASTNITENVVKILLREGFIENVRKHQENKKDFLVLTLRHRRNRKRPYRNILNLKRISRPGLRIYSNYQRIPRILGGIGIVILSTSRGIMTDREARLERIGGEILCYIW.

It belongs to the universal ribosomal protein uS8 family. As to quaternary structure, part of the 30S ribosomal subunit.

The protein localises to the plastid. The protein resides in the chloroplast. Its function is as follows. One of the primary rRNA binding proteins, it binds directly to 16S rRNA central domain where it helps coordinate assembly of the platform of the 30S subunit. This Panax ginseng (Korean ginseng) protein is Small ribosomal subunit protein uS8c (rps8).